The following is a 359-amino-acid chain: Double-stranded RNA-binding protein 3 (359 aa).

2 DRBM domains span residues Met-1–Ser-70 and Ile-87–Lys-155. The span at Glu-266–Ile-280 shows a compositional bias: basic and acidic residues. 2 disordered regions span residues Glu-266–Val-292 and Ala-328–Asn-359. The span at Ala-328–Asn-338 shows a compositional bias: pro residues.

In terms of biological role, binds double-stranded RNA. This is Double-stranded RNA-binding protein 3 (DRB3) from Arabidopsis thaliana (Mouse-ear cress).